The primary structure comprises 307 residues: Small ribosomal subunit biogenesis GTPase RsgA (307 aa).

Positions 80–237 constitute a CP-type G domain; it reads KADLRQTIVS…IVDTPGIKEF (158 aa). Residues 129 to 132 and 180 to 188 each bind GTP; these read NKID and GQSGVGKSS. The Zn(2+) site is built by cysteine 261, cysteine 266, histidine 268, and cysteine 274.

It belongs to the TRAFAC class YlqF/YawG GTPase family. RsgA subfamily. As to quaternary structure, monomer. Associates with 30S ribosomal subunit, binds 16S rRNA. The cofactor is Zn(2+).

The protein localises to the cytoplasm. Its function is as follows. One of several proteins that assist in the late maturation steps of the functional core of the 30S ribosomal subunit. Helps release RbfA from mature subunits. May play a role in the assembly of ribosomal proteins into the subunit. Circularly permuted GTPase that catalyzes slow GTP hydrolysis, GTPase activity is stimulated by the 30S ribosomal subunit. The chain is Small ribosomal subunit biogenesis GTPase RsgA from Borreliella afzelii (strain PKo) (Borrelia afzelii).